A 155-amino-acid polypeptide reads, in one-letter code: Endoribonuclease YbeY (155 aa).

Positions 113, 117, and 123 each coordinate Zn(2+).

This sequence belongs to the endoribonuclease YbeY family. The cofactor is Zn(2+).

It is found in the cytoplasm. Functionally, single strand-specific metallo-endoribonuclease involved in late-stage 70S ribosome quality control and in maturation of the 3' terminus of the 16S rRNA. In Ureaplasma parvum serovar 3 (strain ATCC 27815 / 27 / NCTC 11736), this protein is Endoribonuclease YbeY.